The following is a 619-amino-acid chain: TOX high mobility group box family member 4 (619 aa).

3 disordered regions span residues 155–227 (LSLG…QKPV), 304–335 (ELDP…TESP), and 436–458 (LPPP…QQQV). Thr176 carries the post-translational modification Phosphothreonine. A phosphoserine mark is found at Ser178 and Ser182. Basic and acidic residues predominate over residues 183–193 (LHEDGVDDFRR). Residues 208–218 (KQKAPKKRKKK) show a composition bias toward basic residues. A Nuclear localization signal motif is present at residues 213-218 (KKRKKK). The HMG box DNA-binding region spans 223 to 291 (PQKPVSAYAL…EYLKALAAYK (69 aa)). Position 313 is a phosphothreonine (Thr313). At Ser315 the chain carries Phosphoserine. Low complexity predominate over residues 320–335 (TTADPASPAPASTESP). Residues 436–453 (LPPPRLQPPPLQQMPQPP) show a composition bias toward pro residues. Arg479 bears the Asymmetric dimethylarginine mark. A phosphoserine mark is found at Ser531, Ser548, Ser550, Ser558, Ser560, and Ser565.

In terms of assembly, component of the PNUTS-PP1 phosphatase complex, composed of PPP1R10/PNUTS, TOX4, WDR82 and PPP1CA or PPP1CB or PPP1CC. Interacts with PPP1R10/PNUTS. Interacts with FOXO1 and CREB1 (increased by cAMP); FOXO1 and CREB1 are required for full induction of TOX4-dependent activity and the interactions are inhibited by insulin.

It localises to the nucleus. It is found in the chromosome. Its activity is regulated as follows. In liver, recruited to target gene promoters following treatment with dexamethasone and cAMP. Binding is decreased in presence of insulin. Transcription factor that modulates cell fate reprogramming from the somatic state to the pluripotent and neuronal fate. In liver, controls the expression of hormone-regulated gluconeogenic genes such as G6PC1 and PCK1. This regulation is independent of the insulin receptor activation. Also acts as a regulatory component of protein phosphatase 1 (PP1) complexes. Component of the PNUTS-PP1 protein phosphatase complex, a PP1 complex that regulates RNA polymerase II transcription pause-release. PNUTS-PP1 also plays a role in the control of chromatin structure and cell cycle progression during the transition from mitosis into interphase. The polypeptide is TOX high mobility group box family member 4 (Tox4) (Rattus norvegicus (Rat)).